We begin with the raw amino-acid sequence, 245 residues long: Phosphoribosylaminoimidazole-succinocarboxamide synthase (245 aa).

Belongs to the SAICAR synthetase family.

It carries out the reaction 5-amino-1-(5-phospho-D-ribosyl)imidazole-4-carboxylate + L-aspartate + ATP = (2S)-2-[5-amino-1-(5-phospho-beta-D-ribosyl)imidazole-4-carboxamido]succinate + ADP + phosphate + 2 H(+). It functions in the pathway purine metabolism; IMP biosynthesis via de novo pathway; 5-amino-1-(5-phospho-D-ribosyl)imidazole-4-carboxamide from 5-amino-1-(5-phospho-D-ribosyl)imidazole-4-carboxylate: step 1/2. This chain is Phosphoribosylaminoimidazole-succinocarboxamide synthase, found in Nostoc sp. (strain PCC 7120 / SAG 25.82 / UTEX 2576).